The sequence spans 93 residues: Small ribosomal subunit protein uS19 (93 aa).

It belongs to the universal ribosomal protein uS19 family.

Protein S19 forms a complex with S13 that binds strongly to the 16S ribosomal RNA. The chain is Small ribosomal subunit protein uS19 from Syntrophus aciditrophicus (strain SB).